The chain runs to 458 residues: Putative long chain fatty acid-CoA ligase VraA (458 aa).

This sequence belongs to the ATP-dependent AMP-binding enzyme family.

The sequence is that of Putative long chain fatty acid-CoA ligase VraA (vraA) from Staphylococcus aureus (strain MRSA252).